The primary structure comprises 284 residues: MDNKIIKKVGVILRPSSPQLKSGYEKLEKIFSSYSIEVLIEDKSAKMIGASGASFKKICNECDFLVSFGGDGTLISTVRKSFDYDIPILGIHAGNLGFLADLSLDELDSFVEKITQNRYKIDERAVLEATVIKNEKEIKMYAFNDVVLTRTRVSNMIHIETLVNSRSFNTYYGDGVVVSTPTGSTAYNLSAGGPVLFPMSNVFALTPICPHSLTQRPVVLPGKFTIEMKTSEERALIIIDGQDVHELELGESVHIKLATKTVKLMHKEEYNYFDVLKEKLRWGE.

Aspartate 71 functions as the Proton acceptor in the catalytic mechanism. NAD(+) contacts are provided by residues aspartate 71–glycine 72, asparagine 144–aspartate 145, aspartate 174, threonine 185–serine 190, and glutamine 242.

This sequence belongs to the NAD kinase family. The cofactor is a divalent metal cation.

The protein resides in the cytoplasm. The catalysed reaction is NAD(+) + ATP = ADP + NADP(+) + H(+). Its function is as follows. Involved in the regulation of the intracellular balance of NAD and NADP, and is a key enzyme in the biosynthesis of NADP. Catalyzes specifically the phosphorylation on 2'-hydroxyl of the adenosine moiety of NAD to yield NADP. The polypeptide is NAD kinase (Sulfurimonas denitrificans (strain ATCC 33889 / DSM 1251) (Thiomicrospira denitrificans (strain ATCC 33889 / DSM 1251))).